The following is a 151-amino-acid chain: Transcriptional regulator MraZ (151 aa).

SpoVT-AbrB domains follow at residues 5-52 and 81-124; these read ATAV…PLMN and ATEC…SDVE.

Belongs to the MraZ family. Forms oligomers.

It is found in the cytoplasm. Its subcellular location is the nucleoid. This is Transcriptional regulator MraZ from Haemophilus influenzae (strain PittGG).